Here is a 285-residue protein sequence, read N- to C-terminus: Tryptophan synthase alpha chain (285 aa).

Catalysis depends on proton acceptor residues Glu53 and Asp64.

The protein belongs to the TrpA family. In terms of assembly, tetramer of two alpha and two beta chains.

The enzyme catalyses (1S,2R)-1-C-(indol-3-yl)glycerol 3-phosphate + L-serine = D-glyceraldehyde 3-phosphate + L-tryptophan + H2O. It participates in amino-acid biosynthesis; L-tryptophan biosynthesis; L-tryptophan from chorismate: step 5/5. The alpha subunit is responsible for the aldol cleavage of indoleglycerol phosphate to indole and glyceraldehyde 3-phosphate. The sequence is that of Tryptophan synthase alpha chain from Bordetella pertussis (strain Tohama I / ATCC BAA-589 / NCTC 13251).